The primary structure comprises 282 residues: Succinate dehydrogenase [ubiquinone] iron-sulfur subunit, mitochondrial (282 aa).

A mitochondrion-targeting transit peptide spans 1–30 (MAAVVGVSLKRGFSATALGRVGLQFQACRE). N6-acetyllysine is present on residues K53 and K57. The 80-residue stretch at 56-135 (DKPRMQTYKV…VSKIYPLPHM (80 aa)) folds into the 2Fe-2S ferredoxin-type domain. [2Fe-2S] cluster-binding residues include C95, C100, C103, and C115. The interaction with SDHAF1 stretch occupies residues 148-220 (FYAQYKSIEP…PAVLMQAYRW (73 aa)). Residues 178-208 (DREKLDGLYECILCACCSTSCPSYWWNGDKY) form the 4Fe-4S ferredoxin-type domain. 3 residues coordinate [4Fe-4S] cluster: C188, C191, and C194. [3Fe-4S] cluster is bound at residue C198. W203 contributes to the a ubiquinone binding site. The [3Fe-4S] cluster site is built by C245 and C251. C255 contacts [4Fe-4S] cluster.

It belongs to the succinate dehydrogenase/fumarate reductase iron-sulfur protein family. As to quaternary structure, component of complex II composed of four subunits: the flavoprotein (FP) SDHA, iron-sulfur protein (IP) SDHB, and a cytochrome b560 composed of SDHC and SDHD. Interacts with SDHAF1; the interaction is required for iron-sulfur cluster incorporation into SDHB. Requires [2Fe-2S] cluster as cofactor. It depends on [3Fe-4S] cluster as a cofactor. The cofactor is [4Fe-4S] cluster.

It localises to the mitochondrion inner membrane. The enzyme catalyses a quinone + succinate = fumarate + a quinol. It carries out the reaction (R)-malate + a quinone = enol-oxaloacetate + a quinol. It catalyses the reaction (S)-malate + a quinone = enol-oxaloacetate + a quinol. It participates in carbohydrate metabolism; tricarboxylic acid cycle; fumarate from succinate (eukaryal route): step 1/1. With respect to regulation, enol-oxaloacetate inhibits the succinate dehydrogenase activity. Iron-sulfur protein (IP) subunit of the succinate dehydrogenase complex (mitochondrial respiratory chain complex II), responsible for transferring electrons from succinate to ubiquinone (coenzyme Q). SDH also oxidizes malate to the non-canonical enol form of oxaloacetate, enol-oxaloacetate. Enol-oxaloacetate, which is a potent inhibitor of the succinate dehydrogenase activity, is further isomerized into keto-oxaloacetate. The chain is Succinate dehydrogenase [ubiquinone] iron-sulfur subunit, mitochondrial (Sdhb) from Rattus norvegicus (Rat).